A 686-amino-acid polypeptide reads, in one-letter code: Methionine--tRNA ligase (686 aa).

The short motif at 22–32 (PYANGPIHLGH) is the 'HIGH' region element. Residues Cys153, Cys156, Cys166, and Cys169 each coordinate Zn(2+). Residues 337-341 (KMSKS) carry the 'KMSKS' region motif. Lys340 is an ATP binding site. Residues 547-573 (MLEDSKESTPAPAAAKPKKAATQKADA) are disordered. The tRNA-binding domain occupies 584 to 686 (DFLKVKLRVA…SGAEPGMEVR (103 aa)).

The protein belongs to the class-I aminoacyl-tRNA synthetase family. MetG type 1 subfamily. Homodimer. Requires Zn(2+) as cofactor.

The protein resides in the cytoplasm. It carries out the reaction tRNA(Met) + L-methionine + ATP = L-methionyl-tRNA(Met) + AMP + diphosphate. Its function is as follows. Is required not only for elongation of protein synthesis but also for the initiation of all mRNA translation through initiator tRNA(fMet) aminoacylation. The protein is Methionine--tRNA ligase of Alcanivorax borkumensis (strain ATCC 700651 / DSM 11573 / NCIMB 13689 / SK2).